Reading from the N-terminus, the 232-residue chain is Thiamine import ATP-binding protein ThiQ (232 aa).

Residues 2 to 230 (LKLTDITWLY…KASASAILGI (229 aa)) form the ABC transporter domain. Residue 32 to 39 (GPSGAGKS) participates in ATP binding.

It belongs to the ABC transporter superfamily. Thiamine importer (TC 3.A.1.19.1) family. The complex is composed of two ATP-binding proteins (ThiQ), two transmembrane proteins (ThiP) and a solute-binding protein (ThiB).

It localises to the cell inner membrane. It carries out the reaction thiamine(out) + ATP + H2O = thiamine(in) + ADP + phosphate + H(+). Its function is as follows. Part of the ABC transporter complex ThiBPQ involved in thiamine import. Responsible for energy coupling to the transport system. This chain is Thiamine import ATP-binding protein ThiQ, found in Shigella boydii serotype 4 (strain Sb227).